The sequence spans 209 residues: Regulator of G-protein signaling 1 (209 aa).

Positions 18–42 (FFSASPKDSKEPSHSLLDDNKQKKR) are disordered. Residues 24–38 (KDSKEPSHSLLDDNK) are compositionally biased toward basic and acidic residues. One can recognise an RGS domain in the interval 85–200 (SLEKLLANQM…LKSNIYLNLL (116 aa)).

As to quaternary structure, interacts with GNAI1 and GNAQ. As to expression, expressed in multiple tissues.

It is found in the cell membrane. Its subcellular location is the cytoplasm. The protein localises to the cytosol. Regulates G protein-coupled receptor signaling cascades, including signaling downstream of the N-formylpeptide chemoattractant receptors and leukotriene receptors. Inhibits B cell chemotaxis toward CXCL12. Inhibits signal transduction by increasing the GTPase activity of G protein alpha subunits, thereby driving them into their inactive GDP-bound form. The chain is Regulator of G-protein signaling 1 (Rgs1) from Rattus norvegicus (Rat).